The following is a 661-amino-acid chain: Acetyl-coenzyme A synthetase (661 aa).

CoA-binding positions include 197–200 (RGGK) and T320. Residues 396–398 (GEP), 420–425 (DTWWQT), D511, and R526 contribute to the ATP site. Position 534 (S534) interacts with CoA. Residue R537 coordinates ATP. Mg(2+)-binding residues include V548 and V553. K620 carries the post-translational modification N6-acetyllysine.

Belongs to the ATP-dependent AMP-binding enzyme family. Mg(2+) serves as cofactor. Post-translationally, acetylated. Deacetylation by the SIR2-homolog deacetylase activates the enzyme.

It carries out the reaction acetate + ATP + CoA = acetyl-CoA + AMP + diphosphate. Functionally, catalyzes the conversion of acetate into acetyl-CoA (AcCoA), an essential intermediate at the junction of anabolic and catabolic pathways. AcsA undergoes a two-step reaction. In the first half reaction, AcsA combines acetate with ATP to form acetyl-adenylate (AcAMP) intermediate. In the second half reaction, it can then transfer the acetyl group from AcAMP to the sulfhydryl group of CoA, forming the product AcCoA. In Leptospira interrogans serogroup Icterohaemorrhagiae serovar copenhageni (strain Fiocruz L1-130), this protein is Acetyl-coenzyme A synthetase.